The primary structure comprises 186 residues: Putative 3-methyladenine DNA glycosylase (186 aa).

This sequence belongs to the DNA glycosylase MPG family.

This chain is Putative 3-methyladenine DNA glycosylase, found in Borreliella afzelii (strain PKo) (Borrelia afzelii).